The chain runs to 395 residues: uncharacterized protein (395 aa).

Disordered regions lie at residues Met1–Ser121, Met136–Asn187, Gln308–Glu335, and Ile365–Asp395. A compositionally biased stretch (basic and acidic residues) spans Pro13–Gln28. Basic residues predominate over residues Lys64–Ser73. Positions Ser97–Glu111 are enriched in basic and acidic residues. The span at Thr144–Asn164 shows a compositional bias: polar residues. Residues Lys170–Gly179 are compositionally biased toward basic residues. Positions Ile365 to Lys377 are enriched in basic residues. Basic and acidic residues predominate over residues Lys378–Asp395.

This is an uncharacterized protein from Caenorhabditis elegans.